The sequence spans 250 residues: 2,3-bisphosphoglycerate-dependent phosphoglycerate mutase (250 aa).

Residues 8 to 15 (RHGQSAWN), 21 to 22 (TG), Arg60, 87 to 90 (ERHY), Lys98, 114 to 115 (RR), and 183 to 184 (GN) contribute to the substrate site. His9 serves as the catalytic Tele-phosphohistidine intermediate. The active-site Proton donor/acceptor is Glu87.

Belongs to the phosphoglycerate mutase family. BPG-dependent PGAM subfamily. Homodimer.

The enzyme catalyses (2R)-2-phosphoglycerate = (2R)-3-phosphoglycerate. Its pathway is carbohydrate degradation; glycolysis; pyruvate from D-glyceraldehyde 3-phosphate: step 3/5. Its function is as follows. Catalyzes the interconversion of 2-phosphoglycerate and 3-phosphoglycerate. The protein is 2,3-bisphosphoglycerate-dependent phosphoglycerate mutase of Nitratidesulfovibrio vulgaris (strain DP4) (Desulfovibrio vulgaris).